The primary structure comprises 185 residues: Lysozyme g (185 aa).

At glutamine 1 the chain carries Pyrrolidone carboxylic acid. 2 cysteine pairs are disulfide-bonded: cysteine 4–cysteine 60 and cysteine 18–cysteine 29. Active-site residues include glutamate 73 and aspartate 86.

The protein belongs to the glycosyl hydrolase 23 family.

The protein localises to the secreted. It catalyses the reaction Hydrolysis of (1-&gt;4)-beta-linkages between N-acetylmuramic acid and N-acetyl-D-glucosamine residues in a peptidoglycan and between N-acetyl-D-glucosamine residues in chitodextrins.. The polypeptide is Lysozyme g (Casuarius casuarius (Southern cassowary)).